The sequence spans 874 residues: Alanine--tRNA ligase (874 aa).

Positions 563, 567, 665, and 669 each coordinate Zn(2+).

It belongs to the class-II aminoacyl-tRNA synthetase family. Zn(2+) serves as cofactor.

It is found in the cytoplasm. The catalysed reaction is tRNA(Ala) + L-alanine + ATP = L-alanyl-tRNA(Ala) + AMP + diphosphate. Its function is as follows. Catalyzes the attachment of alanine to tRNA(Ala) in a two-step reaction: alanine is first activated by ATP to form Ala-AMP and then transferred to the acceptor end of tRNA(Ala). Also edits incorrectly charged Ser-tRNA(Ala) and Gly-tRNA(Ala) via its editing domain. This is Alanine--tRNA ligase from Histophilus somni (strain 2336) (Haemophilus somnus).